The sequence spans 529 residues: Peptide chain release factor 3 (529 aa).

Positions 11–280 (NKRRTFAIIS…GLVKWAPAPM (270 aa)) constitute a tr-type G domain. GTP contacts are provided by residues 20 to 27 (SHPDAGKT), 88 to 92 (DTPGH), and 142 to 145 (NKLD).

Belongs to the TRAFAC class translation factor GTPase superfamily. Classic translation factor GTPase family. PrfC subfamily.

The protein resides in the cytoplasm. In terms of biological role, increases the formation of ribosomal termination complexes and stimulates activities of RF-1 and RF-2. It binds guanine nucleotides and has strong preference for UGA stop codons. It may interact directly with the ribosome. The stimulation of RF-1 and RF-2 is significantly reduced by GTP and GDP, but not by GMP. The protein is Peptide chain release factor 3 of Proteus mirabilis (strain HI4320).